Consider the following 591-residue polypeptide: Aspartate--tRNA(Asp/Asn) ligase (591 aa).

Glu-176 contacts L-aspartate. Residues 200–203 (QLFK) form an aspartate region. An L-aspartate-binding site is contributed by Arg-222. ATP-binding positions include 222 to 224 (RDE) and Gln-231. His-450 contacts L-aspartate. Glu-484 contacts ATP. Arg-491 contacts L-aspartate. 536–539 (GLDR) contributes to the ATP binding site.

The protein belongs to the class-II aminoacyl-tRNA synthetase family. Type 1 subfamily. In terms of assembly, homodimer.

Its subcellular location is the cytoplasm. It carries out the reaction tRNA(Asx) + L-aspartate + ATP = L-aspartyl-tRNA(Asx) + AMP + diphosphate. In terms of biological role, aspartyl-tRNA synthetase with relaxed tRNA specificity since it is able to aspartylate not only its cognate tRNA(Asp) but also tRNA(Asn). Reaction proceeds in two steps: L-aspartate is first activated by ATP to form Asp-AMP and then transferred to the acceptor end of tRNA(Asp/Asn). In Bacillus thuringiensis (strain Al Hakam), this protein is Aspartate--tRNA(Asp/Asn) ligase.